The sequence spans 139 residues: Ribulose bisphosphate carboxylase small subunit (139 aa).

It belongs to the RuBisCO small chain family. In terms of assembly, heterohexadecamer of 8 large and 8 small subunits.

The protein localises to the plastid. It is found in the chloroplast. RuBisCO catalyzes two reactions: the carboxylation of D-ribulose 1,5-bisphosphate, the primary event in carbon dioxide fixation, as well as the oxidative fragmentation of the pentose substrate in the photorespiration process. Both reactions occur simultaneously and in competition at the same active site. Although the small subunit is not catalytic it is essential for maximal activity. The sequence is that of Ribulose bisphosphate carboxylase small subunit from Pylaiella littoralis (Seaweed).